Consider the following 154-residue polypeptide: Large-conductance mechanosensitive channel (154 aa).

3 consecutive transmembrane segments (helical) span residues 14 to 34 (VMDL…VTSL), 38 to 58 (IITP…LFIN), and 81 to 101 (GLFL…FIVI).

It belongs to the MscL family. In terms of assembly, homopentamer.

Its subcellular location is the cell membrane. Functionally, channel that opens in response to stretch forces in the membrane lipid bilayer. May participate in the regulation of osmotic pressure changes within the cell. This Brevibacillus brevis (strain 47 / JCM 6285 / NBRC 100599) protein is Large-conductance mechanosensitive channel.